A 281-amino-acid polypeptide reads, in one-letter code: 4-hydroxy-3-methylbut-2-enyl diphosphate reductase (281 aa).

Cys12 contributes to the [4Fe-4S] cluster binding site. Positions 41 and 74 each coordinate (2E)-4-hydroxy-3-methylbut-2-enyl diphosphate. His41 and His74 together coordinate dimethylallyl diphosphate. 2 residues coordinate isopentenyl diphosphate: His41 and His74. Cys96 contacts [4Fe-4S] cluster. His124 is a (2E)-4-hydroxy-3-methylbut-2-enyl diphosphate binding site. Position 124 (His124) interacts with dimethylallyl diphosphate. Residue His124 participates in isopentenyl diphosphate binding. Glu126 serves as the catalytic Proton donor. Residue Thr164 participates in (2E)-4-hydroxy-3-methylbut-2-enyl diphosphate binding. Residue Cys193 coordinates [4Fe-4S] cluster. Ser221, Asn223, and Ser265 together coordinate (2E)-4-hydroxy-3-methylbut-2-enyl diphosphate. Positions 221, 223, and 265 each coordinate dimethylallyl diphosphate. Isopentenyl diphosphate contacts are provided by Ser221, Asn223, and Ser265.

Belongs to the IspH family. It depends on [4Fe-4S] cluster as a cofactor.

It catalyses the reaction isopentenyl diphosphate + 2 oxidized [2Fe-2S]-[ferredoxin] + H2O = (2E)-4-hydroxy-3-methylbut-2-enyl diphosphate + 2 reduced [2Fe-2S]-[ferredoxin] + 2 H(+). The catalysed reaction is dimethylallyl diphosphate + 2 oxidized [2Fe-2S]-[ferredoxin] + H2O = (2E)-4-hydroxy-3-methylbut-2-enyl diphosphate + 2 reduced [2Fe-2S]-[ferredoxin] + 2 H(+). The protein operates within isoprenoid biosynthesis; dimethylallyl diphosphate biosynthesis; dimethylallyl diphosphate from (2E)-4-hydroxy-3-methylbutenyl diphosphate: step 1/1. It functions in the pathway isoprenoid biosynthesis; isopentenyl diphosphate biosynthesis via DXP pathway; isopentenyl diphosphate from 1-deoxy-D-xylulose 5-phosphate: step 6/6. Its function is as follows. Catalyzes the conversion of 1-hydroxy-2-methyl-2-(E)-butenyl 4-diphosphate (HMBPP) into a mixture of isopentenyl diphosphate (IPP) and dimethylallyl diphosphate (DMAPP). Acts in the terminal step of the DOXP/MEP pathway for isoprenoid precursor biosynthesis. The sequence is that of 4-hydroxy-3-methylbut-2-enyl diphosphate reductase from Oleidesulfovibrio alaskensis (strain ATCC BAA-1058 / DSM 17464 / G20) (Desulfovibrio alaskensis).